The chain runs to 1622 residues: Ferredoxin-dependent glutamate synthase 1, chloroplastic/mitochondrial (1622 aa).

Residues 1 to 105 (MAMQSLSPVP…LEDILSERGA (105 aa)) constitute a chloroplast and mitochondrion transit peptide. C106 acts as the For GATase activity in catalysis. The Glutamine amidotransferase type-2 domain occupies 106 to 505 (CGVGFIANLD…PGMMIAVDLV (400 aa)). 1184–1241 (LTETHQTLIANGLRERVILRVDGGLKSGVDVLMAAAMGADEYGFGSLAMIATGCVMAR) contributes to the FMN binding site. Residues C1237, C1243, and C1248 each coordinate [3Fe-4S] cluster.

This sequence belongs to the glutamate synthase family. In terms of assembly, interacts with SHM1. [3Fe-4S] cluster is required as a cofactor. The cofactor is FAD. FMN serves as cofactor. In terms of tissue distribution, highly expressed in leaves. High expression in the leaf mesophyll and phloem companion cell-sieve element complex.

Its subcellular location is the plastid. It is found in the chloroplast stroma. It localises to the mitochondrion matrix. It catalyses the reaction 2 oxidized [2Fe-2S]-[ferredoxin] + 2 L-glutamate = L-glutamine + 2 reduced [2Fe-2S]-[ferredoxin] + 2-oxoglutarate + 2 H(+). It functions in the pathway amino-acid biosynthesis; L-glutamate biosynthesis via GLT pathway; L-glutamate from 2-oxoglutarate and L-glutamine (ferredoxin route): step 1/1. It participates in energy metabolism; nitrogen metabolism. Involved in glutamate biosynthesis in leaf. Required for the reassimilation of ammonium ions generated during photorespiration. This is Ferredoxin-dependent glutamate synthase 1, chloroplastic/mitochondrial from Arabidopsis thaliana (Mouse-ear cress).